We begin with the raw amino-acid sequence, 441 residues long: Eukaryotic translation initiation factor 3 subunit M (441 aa).

The region spanning 196–365 (ESEQAYTYLL…QTFLIHRSTY (170 aa)) is the PCI domain. Positions 405–418 (KEEEANKADNKYDS) are enriched in basic and acidic residues. The interval 405-441 (KEEEANKADNKYDSARGFQRGGQRKQPRALDDDMGLE) is disordered.

This sequence belongs to the eIF-3 subunit M family. In terms of assembly, component of the eukaryotic translation initiation factor 3 (eIF-3) complex.

Its subcellular location is the cytoplasm. Functionally, component of the eukaryotic translation initiation factor 3 (eIF-3) complex, which is involved in protein synthesis of a specialized repertoire of mRNAs and, together with other initiation factors, stimulates binding of mRNA and methionyl-tRNAi to the 40S ribosome. The eIF-3 complex specifically targets and initiates translation of a subset of mRNAs involved in cell proliferation. This is Eukaryotic translation initiation factor 3 subunit M from Phaeosphaeria nodorum (strain SN15 / ATCC MYA-4574 / FGSC 10173) (Glume blotch fungus).